The primary structure comprises 422 residues: Glycerol-3-phosphate dehydrogenase [NAD(+)] 2 (422 aa).

NAD(+)-binding positions include Gly-69–Gly-74, Phe-157, Lys-180, and Ala-213. Lys-180 contacts substrate. Lys-273 (proton acceptor) is an active-site residue. The NAD(+) site is built by Arg-338 and Gln-367. Residue Arg-338–Asn-339 participates in substrate binding.

Belongs to the NAD-dependent glycerol-3-phosphate dehydrogenase family.

The enzyme catalyses sn-glycerol 3-phosphate + NAD(+) = dihydroxyacetone phosphate + NADH + H(+). The chain is Glycerol-3-phosphate dehydrogenase [NAD(+)] 2 (GPD2) from Candida glabrata (strain ATCC 2001 / BCRC 20586 / JCM 3761 / NBRC 0622 / NRRL Y-65 / CBS 138) (Yeast).